The following is a 701-amino-acid chain: Ribosomal RNA large subunit methyltransferase K/L (701 aa).

In terms of domain architecture, THUMP spans 43–154 (LLYQSLMWSR…KETAHISLDL (112 aa)).

This sequence belongs to the methyltransferase superfamily. RlmKL family.

It localises to the cytoplasm. The catalysed reaction is guanosine(2445) in 23S rRNA + S-adenosyl-L-methionine = N(2)-methylguanosine(2445) in 23S rRNA + S-adenosyl-L-homocysteine + H(+). It carries out the reaction guanosine(2069) in 23S rRNA + S-adenosyl-L-methionine = N(2)-methylguanosine(2069) in 23S rRNA + S-adenosyl-L-homocysteine + H(+). Its function is as follows. Specifically methylates the guanine in position 2445 (m2G2445) and the guanine in position 2069 (m7G2069) of 23S rRNA. The polypeptide is Ribosomal RNA large subunit methyltransferase K/L (Klebsiella pneumoniae subsp. pneumoniae (strain ATCC 700721 / MGH 78578)).